Consider the following 162-residue polypeptide: Ribosome maturation factor RimP (162 aa).

This sequence belongs to the RimP family.

Its subcellular location is the cytoplasm. Required for maturation of 30S ribosomal subunits. The sequence is that of Ribosome maturation factor RimP from Leptospira interrogans serogroup Icterohaemorrhagiae serovar copenhageni (strain Fiocruz L1-130).